A 407-amino-acid polypeptide reads, in one-letter code: Dual-specificity RNA methyltransferase RlmN (407 aa).

The active-site Proton acceptor is Glu136. In terms of domain architecture, Radical SAM core spans 144–378 (REDRGAVCIS…MDAGFASPIR (235 aa)). Cys151 and Cys389 are joined by a disulfide. [4Fe-4S] cluster is bound by residues Cys158, Cys162, and Cys165. S-adenosyl-L-methionine is bound by residues 215–216 (GE), Ser247, 269–271 (SLH), and Asn346. Residue Cys389 is the S-methylcysteine intermediate of the active site.

Belongs to the radical SAM superfamily. RlmN family. Requires [4Fe-4S] cluster as cofactor.

It localises to the cytoplasm. It catalyses the reaction adenosine(2503) in 23S rRNA + 2 reduced [2Fe-2S]-[ferredoxin] + 2 S-adenosyl-L-methionine = 2-methyladenosine(2503) in 23S rRNA + 5'-deoxyadenosine + L-methionine + 2 oxidized [2Fe-2S]-[ferredoxin] + S-adenosyl-L-homocysteine. The enzyme catalyses adenosine(37) in tRNA + 2 reduced [2Fe-2S]-[ferredoxin] + 2 S-adenosyl-L-methionine = 2-methyladenosine(37) in tRNA + 5'-deoxyadenosine + L-methionine + 2 oxidized [2Fe-2S]-[ferredoxin] + S-adenosyl-L-homocysteine. In terms of biological role, specifically methylates position 2 of adenine 2503 in 23S rRNA and position 2 of adenine 37 in tRNAs. m2A2503 modification seems to play a crucial role in the proofreading step occurring at the peptidyl transferase center and thus would serve to optimize ribosomal fidelity. The chain is Dual-specificity RNA methyltransferase RlmN from Gluconobacter oxydans (strain 621H) (Gluconobacter suboxydans).